The following is a 178-amino-acid chain: ATP synthase subunit b, chloroplastic (178 aa).

A helical transmembrane segment spans residues isoleucine 23 to glycine 43.

Belongs to the ATPase B chain family. In terms of assembly, F-type ATPases have 2 components, F(1) - the catalytic core - and F(0) - the membrane proton channel. F(1) has five subunits: alpha(3), beta(3), gamma(1), delta(1), epsilon(1). F(0) has four main subunits: a(1), b(1), b'(1) and c(10-14). The alpha and beta chains form an alternating ring which encloses part of the gamma chain. F(1) is attached to F(0) by a central stalk formed by the gamma and epsilon chains, while a peripheral stalk is formed by the delta, b and b' chains.

The protein resides in the plastid. It is found in the chloroplast thylakoid membrane. F(1)F(0) ATP synthase produces ATP from ADP in the presence of a proton or sodium gradient. F-type ATPases consist of two structural domains, F(1) containing the extramembraneous catalytic core and F(0) containing the membrane proton channel, linked together by a central stalk and a peripheral stalk. During catalysis, ATP synthesis in the catalytic domain of F(1) is coupled via a rotary mechanism of the central stalk subunits to proton translocation. Its function is as follows. Component of the F(0) channel, it forms part of the peripheral stalk, linking F(1) to F(0). This is ATP synthase subunit b, chloroplastic from Tetradesmus obliquus (Green alga).